The primary structure comprises 199 residues: Recombination protein RecR (199 aa).

The segment at 58–73 adopts a C4-type zinc-finger fold; that stretch reads CSVCSNLTDIDPCPLC. One can recognise a Toprim domain in the interval 81-176; the sequence is TVICVVQDPR…KATRIAHGIP (96 aa).

This sequence belongs to the RecR family.

May play a role in DNA repair. It seems to be involved in an RecBC-independent recombinational process of DNA repair. It may act with RecF and RecO. This is Recombination protein RecR from Ruminiclostridium cellulolyticum (strain ATCC 35319 / DSM 5812 / JCM 6584 / H10) (Clostridium cellulolyticum).